The chain runs to 325 residues: L-lactate dehydrogenase (325 aa).

Residues V19, D40, K45, Y70, and 84–85 (GA) contribute to the NAD(+) site. Residues Q87 and R93 each contribute to the substrate site. Residues T106, 123-125 (AAN), and S148 each bind NAD(+). 125-128 (NPVD) is a substrate binding site. A substrate-binding site is contributed by 153 to 156 (DSAR). Beta-D-fructose 1,6-bisphosphate contacts are provided by R158 and H173. The Proton acceptor role is filled by H180. At Y225 the chain carries Phosphotyrosine. T234 contacts substrate.

Belongs to the LDH/MDH superfamily. LDH family. As to quaternary structure, homotetramer.

The protein resides in the cytoplasm. It carries out the reaction (S)-lactate + NAD(+) = pyruvate + NADH + H(+). It functions in the pathway fermentation; pyruvate fermentation to lactate; (S)-lactate from pyruvate: step 1/1. Its activity is regulated as follows. Allosterically activated by fructose 1,6-bisphosphate (FBP). Catalyzes the conversion of lactate to pyruvate. The chain is L-lactate dehydrogenase from Latilactobacillus sakei subsp. sakei (strain 23K) (Lactobacillus sakei subsp. sakei).